The primary structure comprises 180 residues: Large ribosomal subunit protein bL19 (180 aa).

Belongs to the bacterial ribosomal protein bL19 family.

In terms of biological role, this protein is located at the 30S-50S ribosomal subunit interface and may play a role in the structure and function of the aminoacyl-tRNA binding site. This is Large ribosomal subunit protein bL19 from Allorhizobium ampelinum (strain ATCC BAA-846 / DSM 112012 / S4) (Agrobacterium vitis (strain S4)).